The chain runs to 131 residues: Torsin-1A-interacting protein 2, isoform IFRG15 (131 aa).

The sequence is that of Torsin-1A-interacting protein 2, isoform IFRG15 (Tor1aip2) from Mus musculus (Mouse).